Reading from the N-terminus, the 214-residue chain is NKG2-D type II integral membrane protein (214 aa).

Topologically, residues 1 to 56 (MGWIRDRRSPSSMEIRELHNRDVINRGAFKSRQKRTQTLITSKCGENPSPFFLARS) are cytoplasmic. Residues 57 to 77 (IAIAMGIRFIVMVMIYSGMII) traverse the membrane as a helical; Signal-anchor for type II membrane protein segment. At 78-214 (NLLFNQEAPS…NTYICMKRTV (137 aa)) the chain is on the extracellular side. Disulfide bonds link cysteine 94–cysteine 103 and cysteine 97–cysteine 108. The 113-residue stretch at 98–210 (PKNWICYRNS…CLTLNTYICM (113 aa)) folds into the C-type lectin domain. Asparagine 113, asparagine 129, asparagine 161, and asparagine 184 each carry an N-linked (GlcNAc...) asparagine glycan. 2 disulfides stabilise this stretch: cysteine 125/cysteine 209 and cysteine 187/cysteine 201.

Homodimer; disulfide-linked. Heterohexamer composed of two subunits of KLRK1 and four subunits of HCST/DAP10. Interacts (via transmembrane domain) with HCST/DAP10 (via transmembrane domain); the interaction is required for KLRK1 NK cell surface and induces NK cell-mediated cytotoxicity. Can form disulfide-bonded heterodimer with CD94. Interacts with CEACAM1; recruits PTPN6 that dephosphorylates VAV1. In terms of tissue distribution, detected in peripheral blood leukocytes, macrophages, monocytes and natural killer cells.

The protein localises to the cell membrane. Its function is as follows. Functions as an activating and costimulatory receptor involved in immunosurveillance upon binding to various cellular stress-inducible ligands displayed at the surface of autologous tumor cells and virus-infected cells. Provides both stimulatory and costimulatory innate immune responses on activated killer (NK) cells, leading to cytotoxic activity. Acts as a costimulatory receptor for T-cell receptor (TCR) in CD8(+) T-cell-mediated adaptive immune responses by amplifying T-cell activation. Stimulates perforin-mediated elimination of ligand-expressing tumor cells. Signaling involves calcium influx, culminating in the expression of TNF-alpha. Participates in NK cell-mediated bone marrow graft rejection. May play a regulatory role in differentiation and survival of NK cells. Binds to ligands belonging to various subfamilies of MHC class I-related glycoproteins. The polypeptide is NKG2-D type II integral membrane protein (KLRK1) (Sus scrofa (Pig)).